Here is a 78-residue protein sequence, read N- to C-terminus: uncharacterized protein (78 aa).

A run of 2 helical transmembrane segments spans residues 20–40 and 57–77; these read SVYF…WLVV and LLMD…ILIA.

Its subcellular location is the cell membrane. This is an uncharacterized protein from Escherichia coli (strain K12).